A 348-amino-acid chain; its full sequence is Benzoate 1,2-dioxygenase electron transfer component (348 aa).

The region spanning 14–109 (HQVALQFEDG…DAVFQIQASS (96 aa)) is the 2Fe-2S ferredoxin-type domain. 4 residues coordinate [2Fe-2S] cluster: C51, C56, C59, and C93. The segment at 111-348 (VCKTKIHHFE…NFLFEKFSAN (238 aa)) is ferredoxin-reductase. The region spanning 116-217 (IHHFEGTLAR…TGPFGSFYLR (102 aa)) is the FAD-binding FR-type domain.

The protein belongs to the bacterial ring-hydroxylating dioxygenase ferredoxin reductase family. As to quaternary structure, this dioxygenase system consists of three proteins: the two subunits of the hydroxylase component (BenA and BenB), and an electron transfer component (BenC). FAD serves as cofactor. [2Fe-2S] cluster is required as a cofactor.

The enzyme catalyses 2 reduced [2Fe-2S]-[ferredoxin] + NAD(+) + H(+) = 2 oxidized [2Fe-2S]-[ferredoxin] + NADH. It functions in the pathway xenobiotic degradation; toluene degradation. Its function is as follows. Electron transfer component of benzoate 1,2-dioxygenase system. The sequence is that of Benzoate 1,2-dioxygenase electron transfer component (benC) from Acinetobacter baylyi (strain ATCC 33305 / BD413 / ADP1).